A 362-amino-acid polypeptide reads, in one-letter code: Biotin synthase (362 aa).

A disordered region spans residues 14-39 (AQRTPEPLPPTSQGLARPSHDVVRGP). A Radical SAM core domain is found at 87 to 316 (HKGGPAALCG…ARDILVCGGR (230 aa)). Residues cysteine 105, cysteine 109, and cysteine 112 each contribute to the [4Fe-4S] cluster site. Residues cysteine 181 and cysteine 241 each contribute to the [2Fe-2S] cluster site.

The protein belongs to the radical SAM superfamily. Biotin synthase family. As to quaternary structure, homodimer. It depends on [4Fe-4S] cluster as a cofactor. [2Fe-2S] cluster serves as cofactor.

It carries out the reaction (4R,5S)-dethiobiotin + (sulfur carrier)-SH + 2 reduced [2Fe-2S]-[ferredoxin] + 2 S-adenosyl-L-methionine = (sulfur carrier)-H + biotin + 2 5'-deoxyadenosine + 2 L-methionine + 2 oxidized [2Fe-2S]-[ferredoxin]. It functions in the pathway cofactor biosynthesis; biotin biosynthesis; biotin from 7,8-diaminononanoate: step 2/2. Catalyzes the conversion of dethiobiotin (DTB) to biotin by the insertion of a sulfur atom into dethiobiotin via a radical-based mechanism. In Nitratidesulfovibrio vulgaris (strain ATCC 29579 / DSM 644 / CCUG 34227 / NCIMB 8303 / VKM B-1760 / Hildenborough) (Desulfovibrio vulgaris), this protein is Biotin synthase.